A 428-amino-acid chain; its full sequence is G2/mitotic-specific cyclin-B (428 aa).

Belongs to the cyclin family. Cyclin AB subfamily. Interacts with the CDC2 protein kinase to form a serine/threonine kinase holoenzyme complex also known as maturation promoting factor (MPF). The cyclin subunit imparts substrate specificity to the complex.

Functionally, essential for the control of the cell cycle at the G2/M (mitosis) transition. The sequence is that of G2/mitotic-specific cyclin-B from Spisula solidissima (Atlantic surf-clam).